Reading from the N-terminus, the 88-residue chain is Phosphocarrier protein HPr (88 aa).

The region spanning 1–88 is the HPr domain; the sequence is MEKKEFHIVA…ETLQKEGLAE (88 aa). Residue His15 is the Pros-phosphohistidine intermediate of the active site. Ser46 carries the phosphoserine; by HPrK/P modification.

Belongs to the HPr family. As to quaternary structure, monomer.

The protein resides in the cytoplasm. Phosphorylation on Ser-46 inhibits the phosphoryl transfer from enzyme I to HPr. General (non sugar-specific) component of the phosphoenolpyruvate-dependent sugar phosphotransferase system (sugar PTS). This major carbohydrate active-transport system catalyzes the phosphorylation of incoming sugar substrates concomitantly with their translocation across the cell membrane. The phosphoryl group from phosphoenolpyruvate (PEP) is transferred to the phosphoryl carrier protein HPr by enzyme I. Phospho-HPr then transfers it to the PTS EIIA domain. Functionally, P-Ser-HPr interacts with the catabolite control protein A (CcpA), forming a complex that binds to DNA at the catabolite response elements cre, operator sites preceding a large number of catabolite-regulated genes. Thus, P-Ser-HPr is a corepressor in carbon catabolite repression (CCR), a mechanism that allows bacteria to coordinate and optimize the utilization of available carbon sources. P-Ser-HPr also plays a role in inducer exclusion, in which it probably interacts with several non-PTS permeases and inhibits their transport activity. The polypeptide is Phosphocarrier protein HPr (ptsH) (Enterococcus faecalis (strain ATCC 700802 / V583)).